The primary structure comprises 418 residues: Ankyrin repeat domain-containing protein 61 (418 aa).

ANK repeat units lie at residues 27–57 (ALHS…NQPL), 74–103 (QPIF…DPEV), 131–160 (TRIQ…QVNA), 166–195 (NKHS…QVNA), 199–228 (SSMT…NVNC), 233–272 (TGNT…QVNA), 276–305 (EGQT…NVNI), and 309–342 (NGES…PLRL).

This Rattus norvegicus (Rat) protein is Ankyrin repeat domain-containing protein 61 (Ankrd61).